Reading from the N-terminus, the 309-residue chain is UDP-N-acetylenolpyruvoylglucosamine reductase (309 aa).

In terms of domain architecture, FAD-binding PCMH-type spans 33-195; sequence VGGQAETLFR…VRARLRTRPG (163 aa). Arg175 is an active-site residue. Ser224 serves as the catalytic Proton donor. Glu294 is an active-site residue.

The protein belongs to the MurB family. FAD serves as cofactor.

It localises to the cytoplasm. It catalyses the reaction UDP-N-acetyl-alpha-D-muramate + NADP(+) = UDP-N-acetyl-3-O-(1-carboxyvinyl)-alpha-D-glucosamine + NADPH + H(+). Its pathway is cell wall biogenesis; peptidoglycan biosynthesis. Cell wall formation. The protein is UDP-N-acetylenolpyruvoylglucosamine reductase of Granulibacter bethesdensis (strain ATCC BAA-1260 / CGDNIH1).